The sequence spans 555 residues: Connector enhancer of kinase suppressor of ras 3 (555 aa).

The 66-residue stretch at 7-72 (WSPKQVVDWT…LEAVDLLCAL (66 aa)) folds into the SAM domain. The 95-residue stretch at 80-174 (NMKNLVLKLR…TTVQKDCFVA (95 aa)) folds into the CRIC domain. The region spanning 211–293 (EVHLPNIKPG…GVVLLLKKRP (83 aa)) is the PDZ domain. 3 disordered regions span residues 309–334 (WKPPLVQTSPPPATTQSPESTMDTSL), 347–390 (PPPP…FLDQ), and 517–537 (IPFQEEGTKKKSGSSATKSSS). Positions 325–546 (SPESTMDTSL…STEPSLLVSW (222 aa)) constitute a DUF1170 domain. Residues serine 381 and serine 383 each carry the phosphoserine modification.

Belongs to the CNKSR family. In terms of assembly, interacts with epithelial sodium channel ENaC. Interacts directly with SCNN1A (ENaC subunit alpha) and SCNN1B (ENaC subunit beta) C-terminal tails. Interacts with ENaC regulatory proteins NEDD4L, RAF1 and SGK1.

It is found in the cytoplasm. The protein resides in the apical cell membrane. In terms of biological role, involved in transepithelial sodium transport. Regulates aldosterone-induced and epithelial sodium channel (ENaC)-mediated sodium transport through regulation of ENaC cell surface expression. Acts as a scaffold protein coordinating the assembly of an ENaC-regulatory complex (ERC). The polypeptide is Connector enhancer of kinase suppressor of ras 3 (CNKSR3) (Homo sapiens (Human)).